The following is a 272-amino-acid chain: Orotidine 5'-phosphate decarboxylase (272 aa).

The active-site Proton donor is Lys93.

This sequence belongs to the OMP decarboxylase family. Type 2 subfamily.

It carries out the reaction orotidine 5'-phosphate + H(+) = UMP + CO2. It functions in the pathway pyrimidine metabolism; UMP biosynthesis via de novo pathway; UMP from orotate: step 2/2. This chain is Orotidine 5'-phosphate decarboxylase, found in Roseiflexus castenholzii (strain DSM 13941 / HLO8).